Consider the following 253-residue polypeptide: Histone H1.4 (253 aa).

Over residues 1–33 (MSDVAVAADTTETPAAPTKASKATKASKATKAS) the composition is skewed to low complexity. The interval 1–43 (MSDVAVAADTTETPAAPTKASKATKASKATKASKATKAKTTKV) is disordered. Residue Ser2 is modified to N-acetylserine. The H15 domain maps to 51 to 127 (AHPPFINMVT…GANGRFRLAE (77 aa)). The tract at residues 134–253 (KSPAAAKKDA…KKAPAAAPEA (120 aa)) is disordered. Composition is skewed to basic and acidic residues over residues 139-149 (AKKDATGEKKA) and 188-200 (AAGD…EVKV). 2 stretches are compositionally biased toward basic residues: residues 201–210 (KKVKSPKKIA) and 234–244 (APKKAAAKPAK).

This sequence belongs to the histone H1/H5 family.

The protein localises to the nucleus. It is found in the chromosome. Its function is as follows. Histones H1 are necessary for the condensation of nucleosome chains into higher-order structures. This Caenorhabditis elegans protein is Histone H1.4 (hil-4).